We begin with the raw amino-acid sequence, 449 residues long: Tubulin alpha-2 chain (449 aa).

The GTP site is built by glutamine 11, glutamate 71, serine 140, glycine 144, threonine 145, threonine 179, asparagine 206, and asparagine 228. Glutamate 71 is a Mg(2+) binding site. Glutamate 254 is a catalytic residue.

The protein belongs to the tubulin family. In terms of assembly, dimer of alpha and beta chains. A typical microtubule is a hollow water-filled tube with an outer diameter of 25 nm and an inner diameter of 15 nM. Alpha-beta heterodimers associate head-to-tail to form protofilaments running lengthwise along the microtubule wall with the beta-tubulin subunit facing the microtubule plus end conferring a structural polarity. Microtubules usually have 13 protofilaments but different protofilament numbers can be found in some organisms and specialized cells. Mg(2+) serves as cofactor.

Its subcellular location is the cytoplasm. The protein localises to the cytoskeleton. It carries out the reaction GTP + H2O = GDP + phosphate + H(+). Tubulin is the major constituent of microtubules, a cylinder consisting of laterally associated linear protofilaments composed of alpha- and beta-tubulin heterodimers. Microtubules grow by the addition of GTP-tubulin dimers to the microtubule end, where a stabilizing cap forms. Below the cap, tubulin dimers are in GDP-bound state, owing to GTPase activity of alpha-tubulin. This is Tubulin alpha-2 chain (tub1) from Schizosaccharomyces pombe (strain 972 / ATCC 24843) (Fission yeast).